The primary structure comprises 698 residues: Ubiquitin-like modifier-activating enzyme ATG7 (698 aa).

An FAP motif motif is present at residues 11–13 (FAP). Residue Lys41 forms a Glycyl lysine isopeptide (Lys-Gly) (interchain with G-Cter in ubiquitin) linkage. The active-site Glycyl thioester intermediate is Cys567. Ser693 bears the Phosphoserine mark.

The protein belongs to the ATG7 family. As to quaternary structure, homodimer. Interacts with ATG3; this interaction is essential for the transfer of ATG8-like proteins's thioester from ATG7 to ATG3 and plays a role in the conjugation of ATG12 to ATG5. Interacts with ATG12. Interacts with ATG10. Forms intermediate conjugates with GABARAPL1. Forms intermediate conjugates with ATG8-like proteins such as GABARAP, GABARAPL2 or MAP1LC3A. Interacts with EP300 acetyltransferase. Interacts with FOXO1. Post-translationally, acetylated by EP300. In terms of processing, polyubiquitinated on Lys-41 via 'Lys-63'-linked ubiquitin by TRIM32; this modification positiely regulates ATG8 and ATG12 activating enzyme activity leading to initiation of autophagy under metabolic stress. In terms of tissue distribution, widely expressed, especially in kidney, liver, lymph nodes and bone marrow.

It localises to the cytoplasm. It is found in the preautophagosomal structure. In terms of biological role, E1-like activating enzyme involved in the 2 ubiquitin-like systems required for cytoplasm to vacuole transport (Cvt) and autophagy. Activates ATG12 for its conjugation with ATG5 as well as the ATG8 family proteins for their conjugation with phosphatidylethanolamine. Both systems are needed for the ATG8 association to Cvt vesicles and autophagosomes membranes. Facilitates LC3-I lipidation with phosphatidylethanolamine to form LC3-II which is found on autophagosomal membranes. Required for autophagic death induced by caspase-8 inhibition. Required for mitophagy which contributes to regulate mitochondrial quantity and quality by eliminating the mitochondria to a basal level to fulfill cellular energy requirements and preventing excess ROS production. Modulates p53/TP53 activity to regulate cell cycle and survival during metabolic stress. Also plays a key role in the maintenance of axonal homeostasis, the prevention of axonal degeneration, the maintenance of hematopoietic stem cells, the formation of Paneth cell granules, as well as in adipose differentiation. Plays a role in regulating the liver clock and glucose metabolism by mediating the autophagic degradation of CRY1 (clock repressor) in a time-dependent manner. This Mus musculus (Mouse) protein is Ubiquitin-like modifier-activating enzyme ATG7.